A 519-amino-acid polypeptide reads, in one-letter code: Ribonuclease Y (519 aa).

A helical transmembrane segment spans residues 3-23; the sequence is LIEIVLLLVGMAVGAATGFIL. Positions 209-272 constitute a KH domain; that stretch reads TVTAVSLPSE…QIAKMALERL (64 aa). One can recognise an HD domain in the interval 335–428; sequence VLQHSMEVAS…VQAADSLSGA (94 aa).

It belongs to the RNase Y family.

Its subcellular location is the cell membrane. In terms of biological role, endoribonuclease that initiates mRNA decay. This chain is Ribonuclease Y, found in Oleidesulfovibrio alaskensis (strain ATCC BAA-1058 / DSM 17464 / G20) (Desulfovibrio alaskensis).